Reading from the N-terminus, the 350-residue chain is GTPase Obg (350 aa).

The region spanning 1–159 is the Obg domain; it reads MKLVDEAEIL…RLLKLELRLL (159 aa). Residues 127-146 are disordered; it reads NMHFKSSVNRAPRQSTTGEE. Residues 130–143 show a composition bias toward polar residues; the sequence is FKSSVNRAPRQSTT. The OBG-type G domain maps to 160-337; it reads ADVGLLGFPN…IMKDVMAFFD (178 aa). GTP-binding positions include 166 to 173, 191 to 195, 213 to 216, 287 to 290, and 318 to 320; these read GFPNAGKS, FTTLY, DVPG, NKAD, and SAL. Ser-173 and Thr-193 together coordinate Mg(2+).

Belongs to the TRAFAC class OBG-HflX-like GTPase superfamily. OBG GTPase family. In terms of assembly, monomer. The cofactor is Mg(2+).

The protein resides in the cytoplasm. Functionally, an essential GTPase which binds GTP, GDP and possibly (p)ppGpp with moderate affinity, with high nucleotide exchange rates and a fairly low GTP hydrolysis rate. Plays a role in control of the cell cycle, stress response, ribosome biogenesis and in those bacteria that undergo differentiation, in morphogenesis control. This is GTPase Obg from Xanthomonas oryzae pv. oryzae (strain MAFF 311018).